Reading from the N-terminus, the 224-residue chain is Peptidyl-prolyl cis-trans isomerase FKBP3 (224 aa).

Alanine 2 is subject to N-acetylalanine. Residue serine 36 is modified to Phosphoserine. The tract at residues 88-118 (VKLSDDKPKDSKSEETLDEGPPKYTKSILKK) is disordered. Residues 89–102 (KLSDDKPKDSKSEE) are compositionally biased toward basic and acidic residues. Residue lysine 99 is modified to N6-acetyllysine. In terms of domain architecture, PPIase FKBP-type spans 128-224 (GDVVHCWYTG…IFEVELVDID (97 aa)). Serine 152 is subject to Phosphoserine. N6-acetyllysine is present on lysine 170.

It belongs to the FKBP-type PPIase family.

The protein resides in the nucleus. It carries out the reaction [protein]-peptidylproline (omega=180) = [protein]-peptidylproline (omega=0). Inhibited preferentially by rapamycin over FK506. Its function is as follows. FK506- and rapamycin-binding proteins (FKBPs) constitute a family of receptors for the two immunosuppressants which inhibit T-cell proliferation by arresting two distinct cytoplasmic signal transmission pathways. PPIases accelerate the folding of proteins. The protein is Peptidyl-prolyl cis-trans isomerase FKBP3 (Fkbp3) of Mus musculus (Mouse).